The following is a 664-amino-acid chain: Methionine--tRNA ligase (664 aa).

Residues 15–25 (YYPSGKAHIGH) carry the 'HIGH' region motif. The short motif at 310–314 (KMSKS) is the 'KMSKS' region element. Position 313 (K313) interacts with ATP. The tRNA-binding domain maps to 563–664 (DFDKIDLRVA…SALPNGAKVK (102 aa)).

Belongs to the class-I aminoacyl-tRNA synthetase family. MetG type 2B subfamily. Homodimer.

Its subcellular location is the cytoplasm. The enzyme catalyses tRNA(Met) + L-methionine + ATP = L-methionyl-tRNA(Met) + AMP + diphosphate. Functionally, is required not only for elongation of protein synthesis but also for the initiation of all mRNA translation through initiator tRNA(fMet) aminoacylation. This chain is Methionine--tRNA ligase (metG), found in Listeria innocua serovar 6a (strain ATCC BAA-680 / CLIP 11262).